Consider the following 368-residue polypeptide: Apolipoprotein A-V (368 aa).

The first 20 residues, 1–20 (MAAVITWALALLAVFASTQA), serve as a signal peptide directing secretion. At S52 the chain carries Phosphoserine. A coiled-coil region spans residues 231–255 (TRKAKDLHTSIQRNLDQLRDELSAF). Positions 305-333 (EEIQHQLAPPPPSHSAFAPELGHSDSNKA) are disordered.

The protein belongs to the apolipoprotein A1/A4/E family. In terms of assembly, interacts with GPIHBP1. Interacts with SORL1; this interaction leads to APOA5 internalization and sorting either to lysosomes and degradation, or to the trans-Golgi network. In terms of processing, phosphorylated by FAM20C in the extracellular medium. As to expression, liver.

It is found in the secreted. It localises to the early endosome. The protein resides in the late endosome. The protein localises to the golgi apparatus. Its subcellular location is the trans-Golgi network. In terms of biological role, minor apolipoprotein mainly associated with HDL and to a lesser extent with VLDL. May also be associated with chylomicrons. Important determinant of plasma triglyceride (TG) levels by both being a potent stimulator of apo-CII lipoprotein lipase (LPL) TG hydrolysis and an inhibitor of the hepatic VLDL-TG production rate (without affecting the VLDL-apoB production rate). Activates poorly lecithin:cholesterol acyltransferase (LCAT) and does not enhance efflux of cholesterol from macrophages. Binds heparin. In Mus musculus (Mouse), this protein is Apolipoprotein A-V (Apoa5).